The following is an 87-amino-acid chain: uncharacterized protein (87 aa).

The chain crosses the membrane as a helical span at residues 63-83; it reads IVLALVLGVFSLVGLIFIIYF.

It is found in the membrane. This is an uncharacterized protein from Dictyostelium discoideum (Social amoeba).